A 394-amino-acid polypeptide reads, in one-letter code: Putative 8-amino-7-oxononanoate synthase (394 aa).

Substrate is bound at residue arginine 23. Residue 110–111 coordinates pyridoxal 5'-phosphate; it reads GY. Histidine 135 serves as a coordination point for substrate. Residues serine 182, 207-210, and 238-241 each bind pyridoxal 5'-phosphate; these read DEAH and TFSK. Lysine 241 is subject to N6-(pyridoxal phosphate)lysine. A substrate-binding site is contributed by threonine 355.

Belongs to the class-II pyridoxal-phosphate-dependent aminotransferase family. BioF subfamily. Homodimer. Pyridoxal 5'-phosphate is required as a cofactor.

The catalysed reaction is 6-carboxyhexanoyl-[ACP] + L-alanine + H(+) = (8S)-8-amino-7-oxononanoate + holo-[ACP] + CO2. Its pathway is cofactor biosynthesis; biotin biosynthesis. Functionally, catalyzes the decarboxylative condensation of pimeloyl-[acyl-carrier protein] and L-alanine to produce 8-amino-7-oxononanoate (AON), [acyl-carrier protein], and carbon dioxide. The chain is Putative 8-amino-7-oxononanoate synthase (bioF) from Bacillus cereus (strain Q1).